The chain runs to 156 residues: E3 ubiquitin-protein ligase LAP (156 aa).

An RING-CH-type zinc finger spans residues 1–55 (MSDICWICNDVCDERNNFCGCNEEYKVVHIKCMQLWINYSKKKECNLCKTKYNIK). The Cytoplasmic segment spans residues 1 to 73 (MSDICWICND…WNWCFNDKKT (73 aa)). Cys-5, Cys-8, Cys-19, Cys-21, His-29, Cys-32, Cys-45, and Cys-48 together coordinate Zn(2+). A helical membrane pass occupies residues 74–94 (TLFKIFFILFALVFIFLTITL). At 95–111 (SNDMANLVTGINDLICS) the chain is on the lumenal side. Residues 112–132 (IIFLIVYTVVMLTSICFSVFV) traverse the membrane as a helical segment. Residues 133 to 156 (VAIVVDFLLEAKEKNSFLTIREIV) lie on the Cytoplasmic side of the membrane.

It belongs to the poxviridae LAP protein family.

Its subcellular location is the host membrane. It localises to the host Golgi apparatus. The protein resides in the host trans-Golgi network membrane. The protein localises to the host early endosome membrane. The enzyme catalyses S-ubiquitinyl-[E2 ubiquitin-conjugating enzyme]-L-cysteine + [acceptor protein]-L-lysine = [E2 ubiquitin-conjugating enzyme]-L-cysteine + N(6)-ubiquitinyl-[acceptor protein]-L-lysine.. Functionally, E3 ubiquitin-protein ligase which promotes ubiquitination and subsequent degradation of host MHC-I and CD4 molecules, presumably to prevent lysis of infected cells by cytotoxic T-lymphocytes and NK cell. Binds target molecules through transmembrane interaction. The result of this ubiquitination is the enhancement of the endocytosis of the target chain and the delivery to the lysosome, where it is proteolytically destroyed. This chain is E3 ubiquitin-protein ligase LAP, found in Yaba-like disease virus (YLDV).